We begin with the raw amino-acid sequence, 425 residues long: Homogentisate 1,2-dioxygenase (425 aa).

Histidine 283 functions as the Proton acceptor in the catalytic mechanism. Residues histidine 326 and glutamate 332 each coordinate Fe cation. Positions 341 and 362 each coordinate homogentisate. A Fe cation-binding site is contributed by histidine 362.

Belongs to the homogentisate dioxygenase family. As to quaternary structure, hexamer; dimer of trimers. Requires Fe cation as cofactor.

It carries out the reaction homogentisate + O2 = 4-maleylacetoacetate + H(+). It participates in amino-acid degradation; L-phenylalanine degradation; acetoacetate and fumarate from L-phenylalanine: step 4/6. In terms of biological role, involved in the catabolism of homogentisate (2,5-dihydroxyphenylacetate or 2,5-OH-PhAc), a central intermediate in the degradation of phenylalanine and tyrosine. Catalyzes the oxidative ring cleavage of the aromatic ring of homogentisate to yield maleylacetoacetate. The chain is Homogentisate 1,2-dioxygenase from Caulobacter vibrioides (strain ATCC 19089 / CIP 103742 / CB 15) (Caulobacter crescentus).